The primary structure comprises 206 residues: MARYTGPDCRLCRREGMKLFLKGTKCFSEKCPFERRPFAPGQHGRAQRKLTEYGLRLREKQRAKRIYGVLERQFRRYFEIASKGRGVTGERLLQLLETRLDNVVYRLGWALSRDQARQLVSHGKIAVNGKRVNIPSYNLKPGDVVELLDKDLIPVQEAISVFGNKNVPAWLELDRENFRGRVLRLPKREEIDTPVQEQLIVEFYSR.

The S4 RNA-binding domain occupies 98–155; that stretch reads TRLDNVVYRLGWALSRDQARQLVSHGKIAVNGKRVNIPSYNLKPGDVVELLDKDLIPV.

The protein belongs to the universal ribosomal protein uS4 family. In terms of assembly, part of the 30S ribosomal subunit. Contacts protein S5. The interaction surface between S4 and S5 is involved in control of translational fidelity.

Its function is as follows. One of the primary rRNA binding proteins, it binds directly to 16S rRNA where it nucleates assembly of the body of the 30S subunit. With S5 and S12 plays an important role in translational accuracy. This is Small ribosomal subunit protein uS4 from Dictyoglomus thermophilum (strain ATCC 35947 / DSM 3960 / H-6-12).